The following is a 310-amino-acid chain: GPN-loop GTPase 2 (310 aa).

Alanine 2 carries the post-translational modification N-acetylalanine. A GTP-binding site is contributed by 19–24 (GSGKTT). The Gly-Pro-Asn (GPN)-loop; involved in dimer interface motif lies at 76 to 78 (GPN). Position 178 to 181 (178 to 181 (SKMD)) interacts with GTP.

Belongs to the GPN-loop GTPase family. In terms of assembly, heterodimers with GPN1 or GPN3. Binds to RNA polymerase II (RNAPII).

In terms of biological role, small GTPase required for proper localization of RNA polymerase II and III (RNAPII and RNAPIII). May act at an RNAP assembly step prior to nuclear import. The protein is GPN-loop GTPase 2 of Mus musculus (Mouse).